Here is a 79-residue protein sequence, read N- to C-terminus: Transcriptional regulator SplA (79 aa).

In terms of biological role, regulator of the spore photoproduct lyase operon (splAB). This is Transcriptional regulator SplA (splA) from Bacillus subtilis (strain 168).